The sequence spans 151 residues: UPF0208 membrane protein ECA3038 (151 aa).

Transmembrane regions (helical) follow at residues 46–66 and 69–89; these read FGIR…IALG and LGPA…GLWW.

This sequence belongs to the UPF0208 family.

It is found in the cell inner membrane. This is UPF0208 membrane protein ECA3038 from Pectobacterium atrosepticum (strain SCRI 1043 / ATCC BAA-672) (Erwinia carotovora subsp. atroseptica).